The following is a 391-amino-acid chain: UPF0328 protein ECU06_1650 (391 aa).

Belongs to the UPF0328 family.

This chain is UPF0328 protein ECU06_1650, found in Encephalitozoon cuniculi (strain GB-M1) (Microsporidian parasite).